A 236-amino-acid chain; its full sequence is 2,3,4,5-tetrahydropyridine-2,6-dicarboxylate N-acetyltransferase (236 aa).

This sequence belongs to the transferase hexapeptide repeat family. DapH subfamily.

It catalyses the reaction (S)-2,3,4,5-tetrahydrodipicolinate + acetyl-CoA + H2O = L-2-acetamido-6-oxoheptanedioate + CoA. It functions in the pathway amino-acid biosynthesis; L-lysine biosynthesis via DAP pathway; LL-2,6-diaminopimelate from (S)-tetrahydrodipicolinate (acetylase route): step 1/3. In terms of biological role, catalyzes the transfer of an acetyl group from acetyl-CoA to tetrahydrodipicolinate. The protein is 2,3,4,5-tetrahydropyridine-2,6-dicarboxylate N-acetyltransferase of Lactobacillus acidophilus (strain ATCC 700396 / NCK56 / N2 / NCFM).